Consider the following 431-residue polypeptide: Adenylosuccinate lyase (431 aa).

N(6)-(1,2-dicarboxyethyl)-AMP-binding positions include 4–5 (RY), 67–69 (RHD), and 93–94 (TS). Histidine 141 (proton donor/acceptor) is an active-site residue. Glutamine 212 lines the N(6)-(1,2-dicarboxyethyl)-AMP pocket. Serine 262 acts as the Proton donor/acceptor in catalysis. Residues serine 263, 268 to 270 (KRN), asparagine 276, and 307 to 311 (SAERI) each bind N(6)-(1,2-dicarboxyethyl)-AMP.

This sequence belongs to the lyase 1 family. Adenylosuccinate lyase subfamily. In terms of assembly, homotetramer. Residues from neighboring subunits contribute catalytic and substrate-binding residues to each active site.

It catalyses the reaction N(6)-(1,2-dicarboxyethyl)-AMP = fumarate + AMP. The enzyme catalyses (2S)-2-[5-amino-1-(5-phospho-beta-D-ribosyl)imidazole-4-carboxamido]succinate = 5-amino-1-(5-phospho-beta-D-ribosyl)imidazole-4-carboxamide + fumarate. Its pathway is purine metabolism; AMP biosynthesis via de novo pathway; AMP from IMP: step 2/2. It functions in the pathway purine metabolism; IMP biosynthesis via de novo pathway; 5-amino-1-(5-phospho-D-ribosyl)imidazole-4-carboxamide from 5-amino-1-(5-phospho-D-ribosyl)imidazole-4-carboxylate: step 2/2. In terms of biological role, catalyzes two reactions in de novo purine nucleotide biosynthesis. Catalyzes the breakdown of 5-aminoimidazole- (N-succinylocarboxamide) ribotide (SAICAR or 2-[5-amino-1-(5-phospho-beta-D-ribosyl)imidazole-4-carboxamido]succinate) to 5-aminoimidazole-4-carboxamide ribotide (AICAR or 5-amino-1-(5-phospho-beta-D-ribosyl)imidazole-4-carboxamide) and fumarate, and of adenylosuccinate (ADS or N(6)-(1,2-dicarboxyethyl)-AMP) to adenosine monophosphate (AMP) and fumarate. Influences the affinity of glutamyl--tRNA ligase for its substrates and increases its thermostability. This chain is Adenylosuccinate lyase (purB), found in Bacillus subtilis (strain 168).